The primary structure comprises 145 residues: Cell wall teichoic acid glycosylation protein GtcA (145 aa).

Helical transmembrane passes span 21-41, 52-69, 96-116, and 121-141; these read ILMY…TFWL, IANT…YFSN, FLTY…LGIN, and KIWT…WIIF.

Belongs to the GtrA family.

The protein resides in the cell membrane. In terms of biological role, involved in the decoration of cell wall teichoic acid with galactose and glucose. This chain is Cell wall teichoic acid glycosylation protein GtcA (gtcA), found in Listeria innocua serovar 6a (strain ATCC BAA-680 / CLIP 11262).